Here is a 190-residue protein sequence, read N- to C-terminus: Putative 3-methyladenine DNA glycosylase (190 aa).

It belongs to the DNA glycosylase MPG family.

The protein is Putative 3-methyladenine DNA glycosylase of Rubrobacter xylanophilus (strain DSM 9941 / JCM 11954 / NBRC 16129 / PRD-1).